A 1174-amino-acid chain; its full sequence is Lysylphosphatidylglycerol biosynthesis bifunctional protein LysX (1174 aa).

The interval 1–665 (MGVGLHLTVP…LLHHDGSAPD (665 aa)) is phosphatidylglycerol lysyltransferase. Residues 9–36 (VPGLRRDGRGVQSNSHDTSSKTTADISR) form a disordered region. Polar residues predominate over residues 19–33 (VQSNSHDTSSKTTAD). The next 7 helical transmembrane spans lie at 82-102 (VPAA…LASV), 124-144 (FPDT…ALTA), 148-168 (IAWL…AAEI), 179-199 (FGEN…VLGY), 216-236 (AVWL…VELF), 274-294 (AIFG…LFLS), and 614-634 (VIPR…LPFS). Positions 666–1174 (VSGLRQVGLT…TLPFPLAKPH (509 aa)) are lysine--tRNA ligase. The OB DNA-binding region spans 728–806 (VSVSGRIMRI…SLIVSGWRLI (79 aa)). Aspartate 1086 and glutamate 1093 together coordinate Mg(2+).

It in the N-terminal section; belongs to the LPG synthetase family. The protein in the C-terminal section; belongs to the class-II aminoacyl-tRNA synthetase family. Mg(2+) is required as a cofactor.

It localises to the cell membrane. It catalyses the reaction tRNA(Lys) + L-lysine + ATP = L-lysyl-tRNA(Lys) + AMP + diphosphate. The catalysed reaction is L-lysyl-tRNA(Lys) + a 1,2-diacyl-sn-glycero-3-phospho-(1'-sn-glycerol) = a 1,2-diacyl-sn-glycero-3-phospho-1'-(3'-O-L-lysyl)-sn-glycerol + tRNA(Lys). Its function is as follows. Catalyzes the production of L-lysyl-tRNA(Lys)transfer and the transfer of a lysyl group from L-lysyl-tRNA(Lys) to membrane-bound phosphatidylglycerol (PG), which produces lysylphosphatidylglycerol (LPG), one of the components of the bacterial membrane with a positive net charge. LPG synthesis contributes to the resistance to cationic antimicrobial peptides (CAMPs) and likely protects M.tuberculosis against the CAMPs produced by competiting microorganisms (bacteriocins). In fact, the modification of anionic phosphatidylglycerol with positively charged L-lysine results in repulsion of the peptides. The polypeptide is Lysylphosphatidylglycerol biosynthesis bifunctional protein LysX (lysX) (Mycobacterium tuberculosis (strain KZN 1435 / MDR)).